The chain runs to 517 residues: Lysophosphatidylcholine acyltransferase 1 (517 aa).

Residues 1–52 are Cytoplasmic-facing; it reads MRFPNRKLHTAVNGGDSGVSTHFRNPFVHELRFTTLQKLKIAVMTVTLFPVR. The chain crosses the membrane as a helical; Signal-anchor for type II membrane protein span at residues 53–73; sequence LLFAAFMMLLAWPFAFVATVG. Residues 74 to 517 are Lumenal-facing; sequence RSENAVEPLS…SPRNHSKKQD (444 aa). The short motif at 129 to 134 is the HXXXXD motif element; that stretch reads HSSYFD. The N-linked (GlcNAc...) asparagine glycan is linked to Asn207. The EF-hand domain maps to 443 to 478; that stretch reads VGDLAVSELFRAIDSQDKGKITFDELCSFMEKCPDL. Asn511 carries an N-linked (GlcNAc...) asparagine glycan. Positions 514-517 match the Di-lysine motif motif; that stretch reads KKQD.

Belongs to the 1-acyl-sn-glycerol-3-phosphate acyltransferase family.

Its subcellular location is the endoplasmic reticulum membrane. The protein resides in the golgi apparatus membrane. The protein localises to the cell membrane. It localises to the lipid droplet. The enzyme catalyses a 1-acyl-sn-glycero-3-phosphocholine + an acyl-CoA = a 1,2-diacyl-sn-glycero-3-phosphocholine + CoA. The catalysed reaction is a 1-O-alkyl-sn-glycero-3-phosphocholine + acetyl-CoA = a 1-O-alkyl-2-acetyl-sn-glycero-3-phosphocholine + CoA. It catalyses the reaction a 1-acyl-sn-glycero-3-phosphate + an acyl-CoA = a 1,2-diacyl-sn-glycero-3-phosphate + CoA. It carries out the reaction a 1-O-(1Z-alkenyl)-sn-glycero-3-phosphocholine + an acyl-CoA = a 1-O-(1Z-alkenyl)-2-acyl-sn-glycero-3-phosphocholine + CoA. The enzyme catalyses 1-acyl-sn-glycero-3-phospho-(1'-sn-glycerol) + an acyl-CoA = a 1,2-diacyl-sn-glycero-3-phospho-(1'-sn-glycerol) + CoA. The catalysed reaction is 1-hexadecanoyl-sn-glycero-3-phosphocholine + hexadecanoyl-CoA = 1,2-dihexadecanoyl-sn-glycero-3-phosphocholine + CoA. It catalyses the reaction 1-O-hexadecyl-sn-glycero-3-phosphocholine + hexadecanoyl-CoA = 1-O-hexadecyl-2-hexadecanoyl-sn-glycero-3-phosphocholine + CoA. It carries out the reaction a 1-O-(1Z-alkenyl)-sn-glycero-3-phosphocholine + hexadecanoyl-CoA = 1-O-(1Z)-alkenyl-2-hexadecanoyl-sn-glycero-3-phosphocholine + CoA. The enzyme catalyses 1-hexadecanoyl-sn-glycero-3-phospho-(1'-sn-glycerol) + hexadecanoyl-CoA = 1,2-dihexadecanoyl-sn-glycero-3-phospho-(1'-sn-glycerol) + CoA. The catalysed reaction is 1-dodecanoyl-sn-glycero-3-phosphocholine + hexadecanoyl-CoA = 1-dodecanoyl-2-hexadecanoyl-sn-glycero-3-phosphocholine + CoA. It catalyses the reaction 1-tetradecanoyl-sn-glycero-3-phosphocholine + hexadecanoyl-CoA = 1-tetradecanoyl-2-hexadecanoyl-sn-glycero-3-phosphocholine + CoA. It carries out the reaction 1-O-octadecyl-sn-glycero-3-phosphocholine + hexadecanoyl-CoA = 1-O-octadecyl-2-hexadecanoyl-sn-glycero-3-phosphocholine + CoA. The enzyme catalyses 1-octadecanoyl-sn-glycero-3-phosphocholine + hexadecanoyl-CoA = 1-octadecanoyl-2-hexadecanoyl-sn-glycero-3-phosphocholine + CoA. The catalysed reaction is 1-(9Z-octadecenoyl)-sn-glycero-3-phosphocholine + hexadecanoyl-CoA = 1-(9Z-octadecenoyl)-2-hexadecanoyl-sn-glycero-3-phosphocholine + CoA. It catalyses the reaction 1-eicosanoyl-sn-glycero-3-phosphocholine + hexadecanoyl-CoA = 1-eicosanoyl-2-hexadecanoyl-sn-glycero-3-phosphocholine + CoA. It carries out the reaction hexanoyl-CoA + 1-hexadecanoyl-sn-glycero-3-phosphocholine = 1-hexadecanoyl-2-hexanoyl-sn-glycero-3-phosphocholine + CoA. The enzyme catalyses octanoyl-CoA + 1-hexadecanoyl-sn-glycero-3-phosphocholine = 1-hexadecanoyl-2-octanoyl-sn-glycero-3-phosphocholine + CoA. The catalysed reaction is decanoyl-CoA + 1-hexadecanoyl-sn-glycero-3-phosphocholine = 1-hexadecanoyl-2-decanoyl-sn-glycero-3-phosphocholine + CoA. It catalyses the reaction dodecanoyl-CoA + 1-hexadecanoyl-sn-glycero-3-phosphocholine = 1-hexadecanoyl-2-dodecanoyl-sn-glycero-3-phosphocholine + CoA. It carries out the reaction tetradecanoyl-CoA + 1-hexadecanoyl-sn-glycero-3-phosphocholine = 1-hexadecanoyl-2-tetradecanoyl-sn-glycero-3-phosphocholine + CoA. The enzyme catalyses 1-hexadecanoyl-sn-glycero-3-phosphocholine + (9Z)-octadecenoyl-CoA = 1-hexadecanoyl-2-(9Z-octadecenoyl)-sn-glycero-3-phosphocholine + CoA. The catalysed reaction is (9Z,12Z)-octadecadienoyl-CoA + 1-hexadecanoyl-sn-glycero-3-phosphocholine = 1-hexadecanoyl-2-(9Z,12Z-octadecadienoyl)-sn-glycero-3-phosphocholine + CoA. It catalyses the reaction (4Z,7Z,10Z,13Z,16Z,19Z)-docosahexaenoyl-CoA + 1-hexadecanoyl-sn-glycero-3-phosphocholine = 1-hexadecanoyl-2-(4Z,7Z,10Z,13Z,16Z,19Z-docosahexaenoyl)-sn-glycero-3-phosphocholine + CoA. It carries out the reaction 1-hexadecanoyl-sn-glycero-3-phosphocholine + acetyl-CoA = 1-hexadecanoyl-2-acetyl-sn-glycero-3-phosphocholine + CoA. The enzyme catalyses eicosanoyl-CoA + 1-hexadecanoyl-sn-glycero-3-phosphocholine = 1-hexadecanoyl-2-eicosanoyl-sn-glycero-3-phosphocholine + CoA. The catalysed reaction is 1-O-hexadecyl-sn-glycero-3-phosphocholine + acetyl-CoA = 1-O-hexadecyl-2-acetyl-sn-glycero-3-phosphocholine + CoA. It catalyses the reaction a 1-acyl-sn-glycero-3-phosphocholine + hexadecanoyl-CoA = 1-acyl-2-hexadecanoyl-sn-glycero-3-phosphocholine + CoA. It carries out the reaction a 1-acyl-sn-glycero-3-phosphate + hexadecanoyl-CoA = 1-acyl-2-hexadecanoyl-sn-glycero-3-phosphate + CoA. The enzyme catalyses 1-acyl-sn-glycero-3-phospho-(1'-sn-glycerol) + hexadecanoyl-CoA = 1-acyl-2-hexadecanoyl-sn-glycero-3-phospho-(1'-sn-glycerol) + CoA. It participates in lipid metabolism; phospholipid metabolism. Its function is as follows. Exhibits both acyltransferase and acetyltransferase activities. Activity is calcium-independent. Catalyzes the conversion of lysophosphatidylcholine (1-acyl-sn-glycero-3-phosphocholine or LPC) into phosphatidylcholine (1,2-diacyl-sn-glycero-3-phosphocholine or PC). Catalyzes the conversion 1-acyl-sn-glycerol-3-phosphate (lysophosphatidic acid or LPA) into 1,2-diacyl-sn-glycerol-3-phosphate (phosphatidic acid or PA) by incorporating an acyl moiety at the sn-2 position of the glycerol backbone. The protein is Lysophosphatidylcholine acyltransferase 1 (lpcat1) of Danio rerio (Zebrafish).